The chain runs to 461 residues: Pancreatic triacylglycerol lipase (461 aa).

An N-terminal signal peptide occupies residues 1 to 12 (WTLSLLLGAVVG). 2 disulfides stabilise this stretch: Cys-16-Cys-22 and Cys-103-Cys-114. The active-site Nucleophile is Ser-165. Asp-189 serves as the catalytic Charge relay system. Residues Glu-200, Arg-203, Asp-205, and Asp-208 each contribute to the Ca(2+) site. Cys-250 and Cys-274 are oxidised to a cystine. The Charge relay system role is filled by His-276. Disulfide bonds link Cys-298-Cys-309, Cys-312-Cys-317, and Cys-445-Cys-461. The PLAT domain occupies 351–461 (WRYRVDVTLS…EDVLLTLTAC (111 aa)).

It belongs to the AB hydrolase superfamily. Lipase family. In terms of assembly, forms a 1:1 stoichiometric complex with (pro)colipase/CLPS.

The protein resides in the secreted. It carries out the reaction a triacylglycerol + H2O = a diacylglycerol + a fatty acid + H(+). It catalyses the reaction 1,2,3-tributanoylglycerol + H2O = dibutanoylglycerol + butanoate + H(+). The enzyme catalyses 1,2,3-tri-(9Z-octadecenoyl)-glycerol + H2O = di-(9Z)-octadecenoylglycerol + (9Z)-octadecenoate + H(+). The catalysed reaction is all-trans-retinyl hexadecanoate + H2O = all-trans-retinol + hexadecanoate + H(+). It carries out the reaction 1,2-di-(9Z-octadecenoyl)-glycerol + H2O = (9Z-octadecenoyl)-glycerol + (9Z)-octadecenoate + H(+). Its activity is regulated as follows. Inhibited by bile salts, is reactivated by (pro)colipase/CLPS. Its function is as follows. Plays an important role in fat metabolism. It preferentially splits the esters of long-chain fatty acids at positions 1 and 3, producing mainly 2-monoacylglycerol and free fatty acids, and shows considerably higher activity against insoluble emulsified substrates than against soluble ones. This Equus caballus (Horse) protein is Pancreatic triacylglycerol lipase (PNLIP).